The chain runs to 343 residues: Lumican (343 aa).

The N-terminal stretch at 1–18 (MTLNSLPIFLVLISGIFC) is a signal peptide. Gln19 carries the post-translational modification Pyrrolidone carboxylic acid. Sulfotyrosine occurs at positions 20 and 22. One can recognise an LRRNT domain in the interval 31 to 69 (DPFGPSTAVCAPECNCPLSYPTAMYCDNLKLKTIPIVPS). LRR repeat units lie at residues 70–91 (GIKY…TFDN), 94–117 (DLQW…VFSK), 120–140 (NLKK…PLPK), 141–162 (TLDD…ALEG), 165–186 (NLTV…GAFK), 190–211 (SLLY…LPHS), 212–232 (LLML…YFQG), and 235–255 (TLQY…PGNV). Asn91 is a glycosylation site (N-linked (GlcNAc...) (keratan sulfate) asparagine). Asn130 carries an N-linked (GlcNAc...) (keratan sulfate) asparagine glycan. A glycan (N-linked (GlcNAc...) (keratan sulfate) asparagine) is linked at Asn165. The N-linked (GlcNAc...) (keratan sulfate) asparagine glycan is linked to Asn257. LRR repeat units lie at residues 260–281 (SLVE…SENL), 282–301 (ENFY…SFCK), and 310–330 (KITH…PQEM). Cys300 and Cys333 are oxidised to a cystine. N-linked (GlcNAc...) asparagine glycosylation occurs at Asn320.

This sequence belongs to the small leucine-rich proteoglycan (SLRP) family. SLRP class II subfamily. As to quaternary structure, binds to laminin. Post-translationally, contains keratan sulfate.

The protein resides in the secreted. The protein localises to the extracellular space. Its subcellular location is the extracellular matrix. The sequence is that of Lumican (LUM) from Coturnix japonica (Japanese quail).